The primary structure comprises 912 residues: Transcription factor bHLH140 (912 aa).

The disordered stretch occupies residues 1–57 (MDDFNLRSENPNSSSTTSSSSSSFHRHKSETGNTKRSRSTSTLSTDPQSVAARDRRH). The segment covering 13–23 (SSSTTSSSSSS) has biased composition (low complexity). In terms of domain architecture, bHLH spans 43–92 (LSTDPQSVAARDRRHRISDRFKILQSMVPGGAKMDTVSMLDEAISYVKFL). Position 234 to 241 (234 to 241 (GPPGSGKS)) interacts with ATP. One can recognise a Macro domain in the interval 511–690 (KAKASQKNID…KYKGSQDKAV (180 aa)). Polar residues predominate over residues 657–666 (PKRSSQTAVS). Positions 657 to 706 (PKRSSQTAVSDSGEDIKEDSERNKKYKGSQDKAVTNNLESESLEDTRGSG) are disordered. Residues 720 to 829 (LHSIAMHPER…SQDFNSDSLK (110 aa)) form the HIT domain. The C2H2-type zinc-finger motif lies at 870–893 (LRCNRCRSAHPNIPKLKSHVRSCH).

Homodimer.

The protein localises to the nucleus. The protein is Transcription factor bHLH140 (BHLH140) of Arabidopsis thaliana (Mouse-ear cress).